Reading from the N-terminus, the 377-residue chain is Putative holocytochrome-c synthase (377 aa).

Disordered stretches follow at residues 1 to 29 (MTSS…SNEA) and 111 to 136 (QNSE…KPAG). Basic and acidic residues predominate over residues 7-22 (TTDHPRTGKCPIDHSK). HRM repeat units follow at residues 114-119 (EATPAV) and 124-129 (TCPMSN).

The protein belongs to the cytochrome c-type heme lyase family.

The protein resides in the mitochondrion inner membrane. Its subcellular location is the mitochondrion intermembrane space. The catalysed reaction is holo-[cytochrome c] = apo-[cytochrome c] + heme b. Its function is as follows. Lyase that catalyzes the covalent linking of the heme group to the cytochrome C apoprotein to produce the mature functional cytochrome. This is Putative holocytochrome-c synthase from Schizosaccharomyces pombe (strain 972 / ATCC 24843) (Fission yeast).